Here is a 285-residue protein sequence, read N- to C-terminus: Bifunctional protein FolD (285 aa).

NADP(+) contacts are provided by residues 166–168 (GAS) and Ile-232.

This sequence belongs to the tetrahydrofolate dehydrogenase/cyclohydrolase family. In terms of assembly, homodimer.

It carries out the reaction (6R)-5,10-methylene-5,6,7,8-tetrahydrofolate + NADP(+) = (6R)-5,10-methenyltetrahydrofolate + NADPH. It catalyses the reaction (6R)-5,10-methenyltetrahydrofolate + H2O = (6R)-10-formyltetrahydrofolate + H(+). It functions in the pathway one-carbon metabolism; tetrahydrofolate interconversion. Its function is as follows. Catalyzes the oxidation of 5,10-methylenetetrahydrofolate to 5,10-methenyltetrahydrofolate and then the hydrolysis of 5,10-methenyltetrahydrofolate to 10-formyltetrahydrofolate. This Actinobacillus succinogenes (strain ATCC 55618 / DSM 22257 / CCUG 43843 / 130Z) protein is Bifunctional protein FolD.